The sequence spans 676 residues: MTDKPIKTLTVEQAAEEAADLRPQLLEWGKQYYEADAPSVEDDVYDRVYARLVALETAFPEIVTPDSPTQRVGGSSRSDLPKVTHDIPMLSLGDVFSLDELTEFDERLRGNVDTPFDYNCELKIDGLAISLRYENGKFVQGSTRGNGQIGEDITANLKTIKSIPQTLSRPLTIEVRGECYMPKAAFLALNERREAAGQAPFANPRNAAAGSLRQLDTRVTADRQLATFMYNVADYEPLTTRTQSGLLDELAELGFTTNATYRVAHDMADVAAYIETYQAQRTELAYGIDGIVIKANDLPLQRSLGATVKVPRWAIAYKFPPEEVQTRVLDIEWTIGRTGVVTPTAIMEPVALAGSTVARASLHNPDYLIAKDIRIGDTVLLHKAGDIIPEISQYVAAKRPAEAKAYVIPTTCPSCGAELVHLDDEVALRCINPRCPAQLAEGMNHFASRNAMNIAGLGPQIVAQLFDRNLVQDVADLYRLTTDQLLTLDKFGEKSAQNLLTAIDNSRNNSLERLLFGLGIRHVGAKAARSLAAAFGDMASLMAADSEQISAIDTVGGIIADSVVTYFANTQVHELVAKLQAVGVNMTYTSGTPATNSTSEFTGKRVVLTGKLQELTRPQATEWLEQHGATVTGSVSKKTDLLIAGEAAGSKLAKAQSLDVPVWNEAQLQAAMDETK.

NAD(+)-binding positions include 42–46 (DDVYD), 91–92 (SL), and Glu121. The active-site N6-AMP-lysine intermediate is the Lys123. Arg144, Glu178, Lys294, and Lys318 together coordinate NAD(+). Zn(2+)-binding residues include Cys412, Cys415, Cys430, and Cys435. One can recognise a BRCT domain in the interval 596-676 (NSTSEFTGKR…QLQAAMDETK (81 aa)).

This sequence belongs to the NAD-dependent DNA ligase family. LigA subfamily. Mg(2+) serves as cofactor. Requires Mn(2+) as cofactor.

The enzyme catalyses NAD(+) + (deoxyribonucleotide)n-3'-hydroxyl + 5'-phospho-(deoxyribonucleotide)m = (deoxyribonucleotide)n+m + AMP + beta-nicotinamide D-nucleotide.. In terms of biological role, DNA ligase that catalyzes the formation of phosphodiester linkages between 5'-phosphoryl and 3'-hydroxyl groups in double-stranded DNA using NAD as a coenzyme and as the energy source for the reaction. It is essential for DNA replication and repair of damaged DNA. This Levilactobacillus brevis (strain ATCC 367 / BCRC 12310 / CIP 105137 / JCM 1170 / LMG 11437 / NCIMB 947 / NCTC 947) (Lactobacillus brevis) protein is DNA ligase.